Consider the following 112-residue polypeptide: MARLTAYERRKFRVRNRIKRTGRLRLSVFRSLKHIYAQIIDDEKGVTLVSASSLALKLKGNKTEVARQVGRALAEKALALGIKQVAFDRGPYKYHGRVKALAEGAREGGLEF.

The protein belongs to the universal ribosomal protein uL18 family. Part of the 50S ribosomal subunit; part of the 5S rRNA/L5/L18/L25 subcomplex. Contacts the 5S and 23S rRNAs.

This is one of the proteins that bind and probably mediate the attachment of the 5S RNA into the large ribosomal subunit, where it forms part of the central protuberance. The protein is Large ribosomal subunit protein uL18 of Thermus thermophilus (strain ATCC BAA-163 / DSM 7039 / HB27).